A 540-amino-acid chain; its full sequence is Suppressor of tumorigenicity 7 protein-like (540 aa).

The next 4 helical transmembrane spans lie at tryptophan 24–leucine 44, phenylalanine 68–tryptophan 88, leucine 475–leucine 495, and leucine 502–alanine 522.

It belongs to the ST7 family.

The protein localises to the membrane. The protein is Suppressor of tumorigenicity 7 protein-like (st7l) of Danio rerio (Zebrafish).